The sequence spans 447 residues: Glutamate--tRNA ligase 1 (447 aa).

The short motif at 10–20 (PSPTGMLHVGN) is the 'HIGH' region element. Positions 240–244 (KISKR) match the 'KMSKS' region motif. Lys243 provides a ligand contact to ATP.

It belongs to the class-I aminoacyl-tRNA synthetase family. Glutamate--tRNA ligase type 1 subfamily. As to quaternary structure, monomer.

It is found in the cytoplasm. It catalyses the reaction tRNA(Glu) + L-glutamate + ATP = L-glutamyl-tRNA(Glu) + AMP + diphosphate. Catalyzes the attachment of glutamate to tRNA(Glu) in a two-step reaction: glutamate is first activated by ATP to form Glu-AMP and then transferred to the acceptor end of tRNA(Glu). The sequence is that of Glutamate--tRNA ligase 1 from Rickettsia rickettsii (strain Sheila Smith).